The chain runs to 630 residues: Internalin B (630 aa).

The N-terminal stretch at 1–30 is a signal peptide; sequence MKEKHNPRRKYCLISGLAIIFSLWIIIGNG. The 46-residue stretch at 31–76 folds into the LRRNT domain; that stretch reads AKVQAETITVSTPIKQIFPDDAFAETIKDNLKKKSVTDAVTQNELN. 4 residues coordinate Ca(2+): proline 49, aspartate 51, glutamate 55, and aspartate 59. 7 LRR repeats span residues 75 to 97, 98 to 121, 123 to 141, 142 to 163, 164 to 187, 189 to 207, and 208 to 231; these read LNSI…IQYL, PNVT…NLKN, GWLF…LKDL, KKLK…LVHL, PQLE…RLTK, DTLS…LAGL, and TKLQ…GLKN. The interval 241–319 is ig-like region; that stretch reads ECLNKPINHQ…RFHGRVTQPL (79 aa). The LRRCT domain maps to 241-330; it reads ECLNKPINHQ…EVYTVSYDVD (90 aa). A b repeat region region spans residues 320–392; it reads KEVYTVSYDV…TLYAVFKAET (73 aa). GW domains follow at residues 393–467, 472–550, and 553–630; these read TEKT…LDRY, YDKG…TFYK, and MEKP…RAQK. Positions 399 to 630 are GW repeat region, necessary and sufficient for cell surface attachment, interacts with host C1QBP and with heparin; it reads LTRYVKYIRG…TKAANLRAQK (232 aa).

This sequence belongs to the internalin family. In terms of assembly, monomer. Interacts via its LRR repeats with the extracellular portion of mammalian host MET; MET can bind HGF, its endogenous ligand, and InlB simultaneously. Probably forms a dimer upon interaction with host MET, which subsequently allows dimerization of the host MET and subsequent host signaling; dimerization probably occurs via the convex surface of InlB. Interacts with host complement component 1 Q subcomponent-binding protein (C1QBP). Interacts in vitro with human intestinal mucin-2 (MUC2) but not with mucin-1. Ca(2+) serves as cofactor.

It is found in the secreted. Its subcellular location is the cell surface. It localises to the cell membrane. Functionally, mediates the entry of L.monocytogenes into normally non-phagocytic mammalian host cells. Its host receptor is hepatocyte growth factor receptor (HGF receptor, a tyrosine kinase, MET) which is tyrosine-phosphorylated in response to InlB in human, green monkey, mouse and dog cell lines. Downstream adapter proteins GAB1 and CBL are phosphorylated in response to InlB, which also causes cell colony scattering. InlB binding to mammalian cells is saturable and inhibited by EDTA; InlB-coated beads can be taken up by host cells. Complement component 1 Q subcomponent-binding protein (gC1q-R, C1QBP) might act as an InlB receptor, leading to activation of PI3-kinase in green monkey cells. Stimulation of Tyr-phosphorylation by InlB is antagonized by C1QBP, showing that potentiation of MET signaling via the GW domains is not mediated by C1QBP; the exact role of C1QBP remains to be determined. Stimulation of Tyr-phosphorylation of MET by InlB is potentiated by the InlB GW domains and glycosaminoglycans such as heparin; exogenously added InlB, or hepatocyte growth factor (HGF) will also substitute for bacterial InlB, suggesting InlB promotes bacterial invasion by mimicking the hormone HGF. May stimulate phosphatidylinositol 4,5-bisphosphate 3-kinase (PI3-kinase) in green monkey cells, has less effect in humans as PI3-kinase is constitutively and highly expressed in Caco cells. Binds heparin; C1QBP and heparin seem to bind to the GW domains. The protein is Internalin B (inlB) of Listeria monocytogenes serotype 1/2a (strain EGD / Mackaness).